A 241-amino-acid chain; its full sequence is General transcription factor IIF subunit 2 (241 aa).

This sequence belongs to the TFIIF beta subunit family. Heterodimer of an alpha and a beta subunit.

It is found in the nucleus. TFIIF is a general transcription initiation factor that binds to RNA polymerase II and helps to recruit it to the initiation complex in collaboration with TFIIB. The protein is General transcription factor IIF subunit 2 (gtf2f2) of Dictyostelium discoideum (Social amoeba).